The following is a 325-amino-acid chain: Isoaspartyl peptidase/L-asparaginase (325 aa).

Thr193 (nucleophile) is an active-site residue. Residues 221-224 (RIGD) and 243-246 (TGKG) contribute to the substrate site.

It belongs to the Ntn-hydrolase family. Heterotetramer of two alpha and two beta chains arranged as a dimer of alpha/beta heterodimers. Post-translationally, cleaved into an alpha and beta chain by autocatalysis; this activates the enzyme. The N-terminal residue of the beta subunit is responsible for the nucleophile hydrolase activity. As to expression, expressed in ripening seeds and developing nodules.

The catalysed reaction is Cleavage of a beta-linked Asp residue from the N-terminus of a polypeptide.. Degrades proteins damaged by L-isoaspartyl residue formation (also known as beta-Asp residues). Also has L-asparaginase activity, which is used to liberate stored nitrogen during seed development. The chain is Isoaspartyl peptidase/L-asparaginase from Lupinus luteus (European yellow lupine).